The following is a 273-amino-acid chain: uncharacterized protein (273 aa).

Helical transmembrane passes span 24–44 (VGVS…VTIL) and 103–123 (IVGP…EAWA). Residues 132–194 (SDLPHHGRQS…QPPAQTQPYR (63 aa)) are disordered. The segment covering 164–179 (SSHHIRSPAVARHHKT) has biased composition (basic residues). Residues 183–192 (TTQPPAQTQP) are compositionally biased toward low complexity.

Its subcellular location is the cell membrane. This is an uncharacterized protein from Sinorhizobium fredii (strain NBRC 101917 / NGR234).